Reading from the N-terminus, the 384-residue chain is Dual-specificity RNA methyltransferase RlmN (384 aa).

Glu-105 serves as the catalytic Proton acceptor. The region spanning 111 to 350 (EDDRATLCVS…TIVRKTRGDD (240 aa)) is the Radical SAM core domain. Cys-118 and Cys-355 form a disulfide bridge. [4Fe-4S] cluster contacts are provided by Cys-125, Cys-129, and Cys-132. S-adenosyl-L-methionine is bound by residues 179 to 180 (GE), Ser-211, 233 to 235 (SLH), and Asn-312. The active-site S-methylcysteine intermediate is the Cys-355.

Belongs to the radical SAM superfamily. RlmN family. It depends on [4Fe-4S] cluster as a cofactor.

It localises to the cytoplasm. The catalysed reaction is adenosine(2503) in 23S rRNA + 2 reduced [2Fe-2S]-[ferredoxin] + 2 S-adenosyl-L-methionine = 2-methyladenosine(2503) in 23S rRNA + 5'-deoxyadenosine + L-methionine + 2 oxidized [2Fe-2S]-[ferredoxin] + S-adenosyl-L-homocysteine. The enzyme catalyses adenosine(37) in tRNA + 2 reduced [2Fe-2S]-[ferredoxin] + 2 S-adenosyl-L-methionine = 2-methyladenosine(37) in tRNA + 5'-deoxyadenosine + L-methionine + 2 oxidized [2Fe-2S]-[ferredoxin] + S-adenosyl-L-homocysteine. In terms of biological role, specifically methylates position 2 of adenine 2503 in 23S rRNA and position 2 of adenine 37 in tRNAs. m2A2503 modification seems to play a crucial role in the proofreading step occurring at the peptidyl transferase center and thus would serve to optimize ribosomal fidelity. The chain is Dual-specificity RNA methyltransferase RlmN from Shigella boydii serotype 18 (strain CDC 3083-94 / BS512).